Reading from the N-terminus, the 579-residue chain is Protein disulfide isomerase-like 1-3 (579 aa).

The first 25 residues, 1 to 25 (MASSSTSISLLLFVSFILLLVNSRA), serve as a signal peptide directing secretion. Asn27 is a glycosylation site (N-linked (GlcNAc...) asparagine). Basic and acidic residues-rich tracts occupy residues 44 to 69 (EESK…RDFE) and 80 to 89 (EFHHGDHGYE). The disordered stretch occupies residues 44 to 91 (EESKEQSHGGGSYHEEEHDHQHRDFENYDDLEQGGGEFHHGDHGYEEE). The 124-residue stretch at 81 to 204 (FHHGDHGYEE…IVTWLKKKAS (124 aa)) folds into the Thioredoxin 1 domain. Asn108 and Asn115 each carry an N-linked (GlcNAc...) asparagine glycan. Active-site nucleophile residues include Cys128 and Cys131. The cysteines at positions 128 and 131 are disulfide-linked. N-linked (GlcNAc...) asparagine glycosylation is found at Asn209, Asn293, Asn313, and Asn338. A Thioredoxin 2 domain is found at 416-546 (DFLADKLKPF…LYKFLKKHAS (131 aa)). Residues Cys467 and Cys470 each act as nucleophile in the active site. Cys467 and Cys470 form a disulfide bridge. N-linked (GlcNAc...) asparagine glycosylation is present at Asn520. The interval 558 to 579 (EPVISTMKSDEKIEGDSSKDEL) is disordered. Basic and acidic residues predominate over residues 565–579 (KSDEKIEGDSSKDEL). The Prevents secretion from ER motif lies at 576 to 579 (KDEL).

This sequence belongs to the protein disulfide isomerase family. In terms of tissue distribution, widely expressed.

It is found in the endoplasmic reticulum lumen. The enzyme catalyses Catalyzes the rearrangement of -S-S- bonds in proteins.. Functionally, acts as a protein-folding catalyst that interacts with nascent polypeptides to catalyze the formation, isomerization, and reduction or oxidation of disulfide bonds. In Arabidopsis thaliana (Mouse-ear cress), this protein is Protein disulfide isomerase-like 1-3 (PDIL1-3).